The chain runs to 67 residues: ATP synthase F(0) complex subunit 8 (67 aa).

A helical transmembrane segment spans residues 8–24 (TWFTTIVAMILSLFILM). Lys54 is modified (N6-acetyllysine; alternate). N6-succinyllysine; alternate is present on Lys54. N6-acetyllysine is present on Lys57.

The protein belongs to the ATPase protein 8 family. As to quaternary structure, component of the ATP synthase complex composed at least of ATP5F1A/subunit alpha, ATP5F1B/subunit beta, ATP5MC1/subunit c (homooctomer), MT-ATP6/subunit a, MT-ATP8/subunit 8, ATP5ME/subunit e, ATP5MF/subunit f, ATP5MG/subunit g, ATP5MK/subunit k, ATP5MJ/subunit j, ATP5F1C/subunit gamma, ATP5F1D/subunit delta, ATP5F1E/subunit epsilon, ATP5PF/subunit F6, ATP5PB/subunit b, ATP5PD/subunit d, ATP5PO/subunit OSCP. ATP synthase complex consists of a soluble F(1) head domain (subunits alpha(3) and beta(3)) - the catalytic core - and a membrane F(0) domain - the membrane proton channel (subunits c, a, 8, e, f, g, k and j). These two domains are linked by a central stalk (subunits gamma, delta, and epsilon) rotating inside the F1 region and a stationary peripheral stalk (subunits F6, b, d, and OSCP). Interacts with PRICKLE3.

It is found in the mitochondrion membrane. Functionally, subunit 8, of the mitochondrial membrane ATP synthase complex (F(1)F(0) ATP synthase or Complex V) that produces ATP from ADP in the presence of a proton gradient across the membrane which is generated by electron transport complexes of the respiratory chain. ATP synthase complex consist of a soluble F(1) head domain - the catalytic core - and a membrane F(1) domain - the membrane proton channel. These two domains are linked by a central stalk rotating inside the F(1) region and a stationary peripheral stalk. During catalysis, ATP synthesis in the catalytic domain of F(1) is coupled via a rotary mechanism of the central stalk subunits to proton translocation. In vivo, can only synthesize ATP although its ATP hydrolase activity can be activated artificially in vitro. Part of the complex F(0) domain. This Oryctolagus cuniculus (Rabbit) protein is ATP synthase F(0) complex subunit 8.